Consider the following 669-residue polypeptide: DNA helicase/primase complex-associated protein (669 aa).

A disordered region spans residues 502-526 (RSTAGTGGEPNPRHITGPDTEGNGE).

The protein belongs to the herpesviridae HEPA family. As to quaternary structure, associates with the primase and the helicase to form the helicase-primase complex. Interacts with the origin-binding protein. Interacts with the polymerase catalytic subunit.

It is found in the host nucleus. In terms of biological role, component of the helicase/primase complex. Unwinds the DNA at the replication forks and generates single-stranded DNA for both leading and lagging strand synthesis. The primase synthesizes short RNA primers on the lagging strand that the polymerase presumably elongates using dNTPs. The primase-associated factor has no known catalytic activity in the complex and may serve to facilitate the formation of the replisome by directly interacting with the origin-binding protein and the polymerase. In Human herpesvirus 8 type P (isolate GK18) (HHV-8), this protein is DNA helicase/primase complex-associated protein (ORF40).